Reading from the N-terminus, the 272-residue chain is Putative MgpC-like protein MPN_102 (272 aa).

The protein belongs to the MgpC family.

The protein is Putative MgpC-like protein MPN_102 of Mycoplasma pneumoniae (strain ATCC 29342 / M129 / Subtype 1) (Mycoplasmoides pneumoniae).